Here is a 215-residue protein sequence, read N- to C-terminus: 3,4-dihydroxy-2-butanone 4-phosphate synthase (215 aa).

Residues 37-38 (RE), Asp-42, 150-154 (RRGHT), and Glu-175 contribute to the D-ribulose 5-phosphate site. Glu-38 is a binding site for Mg(2+). His-153 is a binding site for Mg(2+).

The protein belongs to the DHBP synthase family. In terms of assembly, homodimer. Mg(2+) is required as a cofactor. It depends on Mn(2+) as a cofactor.

It catalyses the reaction D-ribulose 5-phosphate = (2S)-2-hydroxy-3-oxobutyl phosphate + formate + H(+). The protein operates within cofactor biosynthesis; riboflavin biosynthesis; 2-hydroxy-3-oxobutyl phosphate from D-ribulose 5-phosphate: step 1/1. Functionally, catalyzes the conversion of D-ribulose 5-phosphate to formate and 3,4-dihydroxy-2-butanone 4-phosphate. In Desulfatibacillum aliphaticivorans, this protein is 3,4-dihydroxy-2-butanone 4-phosphate synthase.